The chain runs to 562 residues: Methionine--tRNA ligase, mitochondrial (562 aa).

Residues methionine 1 to phenylalanine 10 constitute a mitochondrion transit peptide. Residues phenylalanine 43–histidine 53 carry the 'HIGH' region motif. A 'KMSKS' region motif is present at residues lysine 332–serine 336. Residue lysine 335 coordinates ATP.

It belongs to the class-I aminoacyl-tRNA synthetase family.

It localises to the mitochondrion matrix. It carries out the reaction tRNA(Met) + L-methionine + ATP = L-methionyl-tRNA(Met) + AMP + diphosphate. The polypeptide is Methionine--tRNA ligase, mitochondrial (mars2) (Xenopus laevis (African clawed frog)).